A 309-amino-acid polypeptide reads, in one-letter code: Foldase protein PrsA 2 (309 aa).

The first 20 residues, 1-20, serve as a signal peptide directing secretion; sequence MKYRLIGVGASLVVAVMLTG. Cys21 carries N-palmitoyl cysteine lipidation. The S-diacylglycerol cysteine moiety is linked to residue Cys21. The region spanning 137 to 232 is the PpiC domain; it reads MPMTTVQHIA…TADTKDKPTY (96 aa).

Belongs to the PrsA family.

The protein resides in the cell membrane. The enzyme catalyses [protein]-peptidylproline (omega=180) = [protein]-peptidylproline (omega=0). In terms of biological role, plays a major role in protein secretion by helping the post-translocational extracellular folding of several secreted proteins. The chain is Foldase protein PrsA 2 (prsA2) from Lactiplantibacillus plantarum (strain ATCC BAA-793 / NCIMB 8826 / WCFS1) (Lactobacillus plantarum).